The primary structure comprises 200 residues: Proteasome subunit beta 2 (200 aa).

Residues 1–7 (MEEKKTG) constitute a propeptide, removed in mature form; by autocatalysis. Catalysis depends on Thr8, which acts as the Nucleophile.

It belongs to the peptidase T1B family. In terms of assembly, the 20S proteasome core is composed of 14 alpha and 14 beta subunits that assemble into four stacked heptameric rings, resulting in a barrel-shaped structure. The two inner rings, each composed of seven catalytic beta subunits, are sandwiched by two outer rings, each composed of seven alpha subunits. The catalytic chamber with the active sites is on the inside of the barrel. Has a gated structure, the ends of the cylinder being occluded by the N-termini of the alpha-subunits. Is capped at one or both ends by the proteasome regulatory ATPase, PAN.

It localises to the cytoplasm. The enzyme catalyses Cleavage of peptide bonds with very broad specificity.. The formation of the proteasomal ATPase PAN-20S proteasome complex, via the docking of the C-termini of PAN into the intersubunit pockets in the alpha-rings, triggers opening of the gate for substrate entry. Interconversion between the open-gate and close-gate conformations leads to a dynamic regulation of the 20S proteasome proteolysis activity. Component of the proteasome core, a large protease complex with broad specificity involved in protein degradation. The polypeptide is Proteasome subunit beta 2 (Thermococcus gammatolerans (strain DSM 15229 / JCM 11827 / EJ3)).